A 478-amino-acid polypeptide reads, in one-letter code: Lipoprotein lipase (478 aa).

The N-terminal stretch at 1-28 (MESKALLLLALSVCLQSLTVSRGGLVAA) is a signal peptide. An interaction with GPIHBP1 region spans residues 35–56 (KDFRDIESKFALRTPEDTAEDT). A disulfide bond links C57 and C70. Residue N73 is glycosylated (N-linked (GlcNAc...) asparagine). Y124 is modified (3'-nitrotyrosine). S162 serves as the catalytic Nucleophile. D186 acts as the Charge relay system in catalysis. Residue Y194 is modified to 3'-nitrotyrosine. Ca(2+) contacts are provided by A197, R200, S202, and D205. Residues C246 and C269 are joined by a disulfide bond. The segment at 246–269 (CNIGEALRVIAERGLGDVDQLVKC) is essential for determining substrate specificity. H271 acts as the Charge relay system in catalysis. N287 is a glycosylation site (N-linked (GlcNAc...) asparagine). 2 disulfides stabilise this stretch: C294–C313 and C305–C308. The PLAT domain maps to 344 to 467 (FHYQVKIHFS…KGKSPVIFVK (124 aa)). Y346 is subject to 3'-nitrotyrosine. N389 carries N-linked (GlcNAc...) asparagine glycosylation. Positions 420 to 424 (WSNWW) are important for interaction with lipoprotein particles. Residues 433–437 (KIRVK) form an important for heparin binding region. The segment at 446–470 (IFCSREKMSYLQKGKSPVIFVKCHD) is interaction with GPIHBP1. Cysteines 448 and 468 form a disulfide.

Belongs to the AB hydrolase superfamily. Lipase family. In terms of assembly, homodimer. Interacts with GPIHBP1 with 1:1 stoichiometry. Interacts with APOC2; the interaction activates LPL activity in the presence of lipids. Interaction with heparan sulfate proteoglycans is required to protect LPL against loss of activity. Associates with lipoprotein particles in blood plasma. Interacts with LMF1 and SEL1L; interaction with SEL1L is required to prevent aggregation of newly synthesized LPL in the endoplasmic reticulum (ER), and for normal export of LPL from the ER to the extracellular space. Interacts with SORL1; SORL1 acts as a sorting receptor, promoting LPL localization to endosomes and later to lysosomes, leading to degradation of newly synthesized LPL. Tyrosine nitration after lipopolysaccharide (LPS) challenge down-regulates the lipase activity. Detected in milk (at protein level).

Its subcellular location is the cell membrane. It is found in the secreted. It localises to the extracellular space. The protein resides in the extracellular matrix. The catalysed reaction is a triacylglycerol + H2O = a diacylglycerol + a fatty acid + H(+). It carries out the reaction a 1,2-diacyl-sn-glycero-3-phosphocholine + H2O = a 2-acyl-sn-glycero-3-phosphocholine + a fatty acid + H(+). It catalyses the reaction 1,2,3-tri-(9Z-octadecenoyl)-glycerol + H2O = di-(9Z)-octadecenoylglycerol + (9Z)-octadecenoate + H(+). The enzyme catalyses 1,2-di-(9Z-octadecenoyl)-sn-glycero-3-phosphocholine + H2O = (9Z-octadecenoyl)-sn-glycero-3-phosphocholine + (9Z)-octadecenoate + H(+). The catalysed reaction is 1,2,3-tributanoylglycerol + H2O = dibutanoylglycerol + butanoate + H(+). It carries out the reaction 1,2-dihexadecanoyl-sn-glycero-3-phosphocholine + H2O = hexadecanoyl-sn-glycero-3-phosphocholine + hexadecanoate + H(+). Its activity is regulated as follows. The apolipoprotein APOC2 acts as a coactivator of LPL activity. Ca(2+) binding promotes protein stability and formation of the active homodimer. Interaction with GPIHBP1 protects LPL against inactivation by ANGPTL4. Its function is as follows. Key enzyme in triglyceride metabolism. Catalyzes the hydrolysis of triglycerides from circulating chylomicrons and very low density lipoproteins (VLDL), and thereby plays an important role in lipid clearance from the blood stream, lipid utilization and storage. Although it has both phospholipase and triglyceride lipase activities it is primarily a triglyceride lipase with low but detectable phospholipase activity. Mediates margination of triglyceride-rich lipoprotein particles in capillaries. Recruited to its site of action on the luminal surface of vascular endothelium by binding to GPIHBP1 and cell surface heparan sulfate proteoglycans. In Bos taurus (Bovine), this protein is Lipoprotein lipase (LPL).